The sequence spans 343 residues: Phosphate acyltransferase (343 aa).

Belongs to the PlsX family. In terms of assembly, homodimer. Probably interacts with PlsY.

It is found in the cytoplasm. It catalyses the reaction a fatty acyl-[ACP] + phosphate = an acyl phosphate + holo-[ACP]. It functions in the pathway lipid metabolism; phospholipid metabolism. Functionally, catalyzes the reversible formation of acyl-phosphate (acyl-PO(4)) from acyl-[acyl-carrier-protein] (acyl-ACP). This enzyme utilizes acyl-ACP as fatty acyl donor, but not acyl-CoA. The protein is Phosphate acyltransferase of Halorhodospira halophila (strain DSM 244 / SL1) (Ectothiorhodospira halophila (strain DSM 244 / SL1)).